The primary structure comprises 278 residues: Alcohol dehydrogenase-related 31 kDa protein (278 aa).

11 to 34 contacts NAD(+); the sequence is YVADCGGIALETSKVLMTKNIAKL. Ser-139 contributes to the substrate binding site. Tyr-152 acts as the Proton acceptor in catalysis.

Belongs to the short-chain dehydrogenases/reductases (SDR) family.

The chain is Alcohol dehydrogenase-related 31 kDa protein (Adhr) from Drosophila pseudoobscura pseudoobscura (Fruit fly).